Reading from the N-terminus, the 159-residue chain is Aphid transmission protein (159 aa).

It belongs to the caulimoviridae ORF II family.

Its function is as follows. This protein is involved in virus transmission. The sequence is that of Aphid transmission protein from Cauliflower mosaic virus (strain PV147) (CaMV).